Reading from the N-terminus, the 660-residue chain is Acetyl-coenzyme A synthetase (660 aa).

CoA contacts are provided by residues 197–200 (RGGK) and Thr-317. ATP is bound by residues 397 to 399 (GEP), 421 to 426 (DTFWQT), Asp-512, and Arg-528. Ser-536 contacts CoA. An ATP-binding site is contributed by Arg-539. Residues Val-550 and Val-555 each contribute to the Mg(2+) site. Position 625 is an N6-acetyllysine (Lys-625).

This sequence belongs to the ATP-dependent AMP-binding enzyme family. Mg(2+) is required as a cofactor. In terms of processing, acetylated. Deacetylation by the SIR2-homolog deacetylase activates the enzyme.

The enzyme catalyses acetate + ATP + CoA = acetyl-CoA + AMP + diphosphate. Functionally, catalyzes the conversion of acetate into acetyl-CoA (AcCoA), an essential intermediate at the junction of anabolic and catabolic pathways. AcsA undergoes a two-step reaction. In the first half reaction, AcsA combines acetate with ATP to form acetyl-adenylate (AcAMP) intermediate. In the second half reaction, it can then transfer the acetyl group from AcAMP to the sulfhydryl group of CoA, forming the product AcCoA. The polypeptide is Acetyl-coenzyme A synthetase (Cupriavidus taiwanensis (strain DSM 17343 / BCRC 17206 / CCUG 44338 / CIP 107171 / LMG 19424 / R1) (Ralstonia taiwanensis (strain LMG 19424))).